An 856-amino-acid polypeptide reads, in one-letter code: TPR repeat-containing protein TP_0123 (856 aa).

TPR repeat units lie at residues Tyr107–Asp140, Tyr523–Leu556, and Thr603–Tyr636.

The protein is TPR repeat-containing protein TP_0123 of Treponema pallidum (strain Nichols).